Reading from the N-terminus, the 466-residue chain is Ribulose bisphosphate carboxylase large chain (466 aa).

Lys-5 bears the N6,N6,N6-trimethyllysine mark. The substrate site is built by Asn-114 and Thr-164. Residue Lys-166 is the Proton acceptor of the active site. Lys-168 serves as a coordination point for substrate. Mg(2+) contacts are provided by Lys-192, Asp-194, and Glu-195. N6-carboxylysine is present on Lys-192. The active-site Proton acceptor is His-285. Residues Arg-286, His-318, and Ser-370 each coordinate substrate.

This sequence belongs to the RuBisCO large chain family. Type I subfamily. In terms of assembly, heterohexadecamer of 8 large chains and 8 small chains; disulfide-linked. The disulfide link is formed within the large subunit homodimers. Mg(2+) is required as a cofactor. In terms of processing, the disulfide bond which can form in the large chain dimeric partners within the hexadecamer appears to be associated with oxidative stress and protein turnover.

The protein resides in the plastid. Its subcellular location is the chloroplast. It catalyses the reaction 2 (2R)-3-phosphoglycerate + 2 H(+) = D-ribulose 1,5-bisphosphate + CO2 + H2O. The enzyme catalyses D-ribulose 1,5-bisphosphate + O2 = 2-phosphoglycolate + (2R)-3-phosphoglycerate + 2 H(+). Its function is as follows. RuBisCO catalyzes two reactions: the carboxylation of D-ribulose 1,5-bisphosphate, the primary event in carbon dioxide fixation, as well as the oxidative fragmentation of the pentose substrate in the photorespiration process. Both reactions occur simultaneously and in competition at the same active site. The polypeptide is Ribulose bisphosphate carboxylase large chain (Poliothyrsis sinensis (Chinese pearlbloom tree)).